Reading from the N-terminus, the 304-residue chain is Acetaldehyde dehydrogenase 1 (304 aa).

The active-site Acyl-thioester intermediate is C131. NAD(+) contacts are provided by residues 162–170 (SAGPGTRKN) and N273.

It belongs to the acetaldehyde dehydrogenase family.

It carries out the reaction acetaldehyde + NAD(+) + CoA = acetyl-CoA + NADH + H(+). The sequence is that of Acetaldehyde dehydrogenase 1 from Dechloromonas aromatica (strain RCB).